We begin with the raw amino-acid sequence, 163 residues long: Translation initiation factor IF-3-like (163 aa).

It belongs to the IF-3 family.

This chain is Translation initiation factor IF-3-like, found in Nostoc sp. (strain PCC 7120 / SAG 25.82 / UTEX 2576).